The following is a 979-amino-acid chain: Putative disease resistance protein RGA1 (979 aa).

An NB-ARC domain is found at glycine 143–glycine 437. Glycine 182–threonine 189 contributes to the ATP binding site. LRR repeat units lie at residues phenylalanine 524–leucine 547, histidine 549–lysine 570, leucine 571–lysine 594, leucine 595–threonine 619, leucine 637–threonine 661, leucine 748–glycine 773, valine 823–asparagine 841, leucine 842–serine 866, alanine 868–serine 890, leucine 891–glycine 915, threonine 917–histidine 939, and leucine 940–aspartate 965.

It belongs to the disease resistance NB-LRR family.

Disease resistance protein. Resistance proteins guard the plant against pathogens that contain an appropriate avirulence protein via a direct or indirect interaction with this avirulence protein. That triggers a defense system which restricts the pathogen growth. This chain is Putative disease resistance protein RGA1 (RGA1), found in Solanum bulbocastanum (Wild potato).